The sequence spans 497 residues: Sorting nexin-4 (497 aa).

The interval 1 to 59 (MDQHDDFDSVSWRQDPESDISRPTTSGTDADESLEYNRDTNGKRRMSSVHEDPPQAGPL) is disordered. The span at 35 to 53 (EYNRDTNGKRRMSSVHEDP) shows a compositional bias: basic and acidic residues. The PX domain occupies 72–194 (VLECRVDSPL…IFLESPDWNA (123 aa)). Residues Arg-115, Thr-117, Lys-141, and Arg-160 each contribute to the a 1,2-diacyl-sn-glycero-3-phospho-(1D-myo-inositol-3-phosphate) site. Coiled coils occupy residues 235-261 (RRFIEVKEKADKLDEDLNHVEKIVARV) and 397-432 (EQSRRERVRKLELRIDELTREVESAKTTSEMFDEEV).

This sequence belongs to the sorting nexin family.

Its subcellular location is the cytoplasm. The protein resides in the cytosol. The protein localises to the preautophagosomal structure membrane. It is found in the endosome membrane. In terms of biological role, sorting nexin, involved in the separation or division of vacuoles throughout the entire life cycle of the cells. Involved in retrieval of late-Golgi SNAREs from post-Golgi endosomes to the trans-Golgi network, for cytoplasm to vacuole transport (Cvt), and autophagy of large cargos including mitophagy, pexophagy and glycophagy. In Aspergillus fumigatus (strain ATCC MYA-4609 / CBS 101355 / FGSC A1100 / Af293) (Neosartorya fumigata), this protein is Sorting nexin-4 (snx4).